Reading from the N-terminus, the 412-residue chain is CCA-adding enzyme (412 aa).

Serine 41 and lysine 44 together coordinate ATP. The CTP site is built by serine 41 and lysine 44. Mg(2+) is bound by residues aspartate 53, aspartate 55, and aspartate 106. Histidine 129, lysine 149, and tyrosine 158 together coordinate ATP. Residues histidine 129, lysine 149, and tyrosine 158 each contribute to the CTP site.

This sequence belongs to the tRNA nucleotidyltransferase/poly(A) polymerase family. Archaeal CCA-adding enzyme subfamily. In terms of assembly, homodimer. It depends on Mg(2+) as a cofactor.

The catalysed reaction is a tRNA precursor + 2 CTP + ATP = a tRNA with a 3' CCA end + 3 diphosphate. It catalyses the reaction a tRNA with a 3' CCA end + 2 CTP + ATP = a tRNA with a 3' CCACCA end + 3 diphosphate. Its function is as follows. Catalyzes the addition and repair of the essential 3'-terminal CCA sequence in tRNAs without using a nucleic acid template. Adds these three nucleotides in the order of C, C, and A to the tRNA nucleotide-73, using CTP and ATP as substrates and producing inorganic pyrophosphate. tRNA 3'-terminal CCA addition is required both for tRNA processing and repair. Also involved in tRNA surveillance by mediating tandem CCA addition to generate a CCACCA at the 3' terminus of unstable tRNAs. While stable tRNAs receive only 3'-terminal CCA, unstable tRNAs are marked with CCACCA and rapidly degraded. This Saccharolobus solfataricus (strain ATCC 35092 / DSM 1617 / JCM 11322 / P2) (Sulfolobus solfataricus) protein is CCA-adding enzyme.